Reading from the N-terminus, the 356-residue chain is tRNA N6-adenosine threonylcarbamoyltransferase (356 aa).

Residues His115 and His119 each contribute to the Fe cation site. Substrate is bound by residues 139–143 (LVSGG), Asp173, Gly186, Asp190, and Asn291. Asp319 contacts Fe cation.

Belongs to the KAE1 / TsaD family. Requires Fe(2+) as cofactor.

It is found in the cytoplasm. The catalysed reaction is L-threonylcarbamoyladenylate + adenosine(37) in tRNA = N(6)-L-threonylcarbamoyladenosine(37) in tRNA + AMP + H(+). Functionally, required for the formation of a threonylcarbamoyl group on adenosine at position 37 (t(6)A37) in tRNAs that read codons beginning with adenine. Is involved in the transfer of the threonylcarbamoyl moiety of threonylcarbamoyl-AMP (TC-AMP) to the N6 group of A37, together with TsaE and TsaB. TsaD likely plays a direct catalytic role in this reaction. The polypeptide is tRNA N6-adenosine threonylcarbamoyltransferase (Arthrobacter sp. (strain FB24)).